Here is a 139-residue protein sequence, read N- to C-terminus: Translation initiation factor 2 subunit beta (139 aa).

Belongs to the eIF-2-beta/eIF-5 family. As to quaternary structure, heterotrimer composed of an alpha, a beta and a gamma chain.

In terms of biological role, eIF-2 functions in the early steps of protein synthesis by forming a ternary complex with GTP and initiator tRNA. The chain is Translation initiation factor 2 subunit beta from Sulfurisphaera tokodaii (strain DSM 16993 / JCM 10545 / NBRC 100140 / 7) (Sulfolobus tokodaii).